The sequence spans 767 residues: Polyribonucleotide nucleotidyltransferase (767 aa).

Mg(2+) contacts are provided by Asp-488 and Asp-494. Residues 555–614 (PRLYTMKINPEKIRDVIGKGGSVIRALTEETGCQIDIGEDGTITIASTDADKAELAKKRI) form the KH domain. The region spanning 624 to 692 (GKVYEGPVVK…EKGRIKLSMK (69 aa)) is the S1 motif domain. Residues 700–742 (GMEFEERAPRREGGFGDRGDRGDRGPRRDRGGDRPERGERPAR) are compositionally biased toward basic and acidic residues. The interval 700 to 767 (GMEFEERAPR…QPQQQQGQQQ (68 aa)) is disordered. Positions 752–767 (GAPAAGQPQQQQGQQQ) are enriched in low complexity.

The protein belongs to the polyribonucleotide nucleotidyltransferase family. The cofactor is Mg(2+).

The protein localises to the cytoplasm. It carries out the reaction RNA(n+1) + phosphate = RNA(n) + a ribonucleoside 5'-diphosphate. In terms of biological role, involved in mRNA degradation. Catalyzes the phosphorolysis of single-stranded polyribonucleotides processively in the 3'- to 5'-direction. The sequence is that of Polyribonucleotide nucleotidyltransferase from Leptothrix cholodnii (strain ATCC 51168 / LMG 8142 / SP-6) (Leptothrix discophora (strain SP-6)).